The chain runs to 288 residues: Octanoyl-[GcvH]:protein N-octanoyltransferase (288 aa).

Residues 44–253 (AGGPPTFRLW…VLESAMGPQV (210 aa)) form the BPL/LPL catalytic domain. C148 serves as the catalytic Acyl-thioester intermediate. The interval 269 to 288 (GREGASETDPRRVAYGVDRP) is disordered. The segment covering 272–288 (GASETDPRRVAYGVDRP) has biased composition (basic and acidic residues).

Belongs to the octanoyltransferase LipL family.

It catalyses the reaction N(6)-octanoyl-L-lysyl-[glycine-cleavage complex H protein] + L-lysyl-[lipoyl-carrier protein] = N(6)-octanoyl-L-lysyl-[lipoyl-carrier protein] + L-lysyl-[glycine-cleavage complex H protein]. Its pathway is protein modification; protein lipoylation via endogenous pathway; protein N(6)-(lipoyl)lysine from octanoyl-[acyl-carrier-protein]. Catalyzes the amidotransfer (transamidation) of the octanoyl moiety from octanoyl-GcvH to the lipoyl domain of the E2 subunit of lipoate-dependent enzymes. The chain is Octanoyl-[GcvH]:protein N-octanoyltransferase from Kyrpidia tusciae (strain DSM 2912 / NBRC 15312 / T2) (Bacillus tusciae).